The chain runs to 387 residues: Putative gustatory receptor 22d (387 aa).

Residues 1 to 43 lie on the Cytoplasmic side of the membrane; the sequence is MFRPRCGLRQKFVYVILKSILYSSWLLGIFPFKYEPKKRRLRR. The helical transmembrane segment at 44–64 threads the bilayer; that stretch reads SMWLILFGVVISSSLLILMVK. At 65–82 the chain is on the extracellular side; sequence QSAEDREHGIMLDVFQRN. Residues 83–103 form a helical membrane-spanning segment; sequence ALLYQISSLMGVVGVVSICTV. Topologically, residues 104-142 are cytoplasmic; it reads HLRTLWRSKHLEEIYNGLMLLEAKYFCSNAVECPAFDGY. Residues 143 to 163 form a helical membrane-spanning segment; sequence VIQKGVVIVVGLLAPWMVHFG. The Extracellular portion of the chain corresponds to 164–184; the sequence is MPDSKLPVLNVLVVSMVKLGT. The helical transmembrane segment at 185-205 threads the bilayer; sequence LLLALHYHLGVVIIYRFVWLI. The Cytoplasmic portion of the chain corresponds to 206–252; that stretch reads NRELLSLVCSLRGNHKGSSSRVRFLLKLYNKLVNLYSKLADCYDCQT. A helical transmembrane segment spans residues 253-273; sequence VLMMAIFLAANIIVCFYMIVY. The Extracellular portion of the chain corresponds to 274–281; sequence RISLSKMS. A helical membrane pass occupies residues 282-302; that stretch reads FFVMLIMFPLAIANNFMDFWL. Over 303–363 the chain is Cytoplasmic; that stretch reads SMKVCDLLQK…HCGLFHVNRE (61 aa). A helical membrane pass occupies residues 364 to 384; it reads MGFKMFVASVLYLLYLVQFDY. The Extracellular portion of the chain corresponds to 385-387; it reads MNL.

It belongs to the insect chemoreceptor superfamily. Gustatory receptor (GR) family. Gr22e subfamily. As to expression, expressed in neurons of the dorsal pharyngeal sense organs of larvae.

It localises to the cell membrane. In terms of biological role, probable gustatory receptor which mediates acceptance or avoidance behavior, depending on its substrates. The polypeptide is Putative gustatory receptor 22d (Drosophila melanogaster (Fruit fly)).